The primary structure comprises 153 residues: Insulin-like growth factor 1 (153 aa).

The interval 49 to 77 is b; the sequence is GPETLCGAELVDALQFVCGDRGFYFNKPT. 3 disulfide bridges follow: Cys54–Cys96, Cys66–Cys109, and Cys95–Cys100. The interval 78-89 is c; the sequence is GYGSSSRRAPQT. Positions 90-110 are a; the sequence is GIVDECCFRSCDLRRLEMYCA. The interval 111–118 is d; it reads PLKPAKSA. A propeptide spans 119-153 (e peptide); that stretch reads RSVRAQRHTDMPKAQKEVHLKNASRGSAGNKNYRM. Residues 120 to 153 are disordered; it reads SVRAQRHTDMPKAQKEVHLKNASRGSAGNKNYRM. Over residues 125-138 the composition is skewed to basic and acidic residues; the sequence is RHTDMPKAQKEVHL. Positions 142–153 are enriched in polar residues; the sequence is SRGSAGNKNYRM.

Belongs to the insulin family. Forms a ternary complex with IGFR1 and ITGAV:ITGB3. Forms a ternary complex with IGFR1 and ITGA6:ITGB4. Forms a ternary complex with IGFBP3 and ALS.

The protein resides in the secreted. The insulin-like growth factors, isolated from plasma, are structurally and functionally related to insulin but have a much higher growth-promoting activity. May be a physiological regulator of [1-14C]-2-deoxy-D-glucose (2DG) transport and glycogen synthesis in osteoblasts. Stimulates glucose transport in bone-derived osteoblastic (PyMS) cells and is effective at much lower concentrations than insulin, not only regarding glycogen and DNA synthesis but also with regard to enhancing glucose uptake. May play a role in synapse maturation. Ca(2+)-dependent exocytosis of IGF1 is required for sensory perception of smell in the olfactory bulb. Acts as a ligand for IGF1R. Binds to the alpha subunit of IGF1R, leading to the activation of the intrinsic tyrosine kinase activity which autophosphorylates tyrosine residues in the beta subunit thus initiating a cascade of down-stream signaling events leading to activation of the PI3K-AKT/PKB and the Ras-MAPK pathways. Binds to integrins ITGAV:ITGB3 and ITGA6:ITGB4. Its binding to integrins and subsequent ternary complex formation with integrins and IGFR1 are essential for IGF1 signaling. Induces the phosphorylation and activation of IGFR1, MAPK3/ERK1, MAPK1/ERK2 and AKT1. As part of the MAPK/ERK signaling pathway, acts as a negative regulator of apoptosis in cardiomyocytes via promotion of STUB1/CHIP-mediated ubiquitination and degradation of ICER-type isoforms of CREM. The sequence is that of Insulin-like growth factor 1 from Panthera tigris altaica (Siberian tiger).